A 365-amino-acid polypeptide reads, in one-letter code: tRNA/tmRNA (uracil-C(5))-methyltransferase (365 aa).

Residues glutamine 189, tyrosine 217, asparagine 222, glutamate 238, and aspartate 298 each coordinate S-adenosyl-L-methionine. The active-site Nucleophile is cysteine 323. Catalysis depends on glutamate 357, which acts as the Proton acceptor.

This sequence belongs to the class I-like SAM-binding methyltransferase superfamily. RNA M5U methyltransferase family. TrmA subfamily.

The enzyme catalyses uridine(54) in tRNA + S-adenosyl-L-methionine = 5-methyluridine(54) in tRNA + S-adenosyl-L-homocysteine + H(+). It catalyses the reaction uridine(341) in tmRNA + S-adenosyl-L-methionine = 5-methyluridine(341) in tmRNA + S-adenosyl-L-homocysteine + H(+). Functionally, dual-specificity methyltransferase that catalyzes the formation of 5-methyluridine at position 54 (m5U54) in all tRNAs, and that of position 341 (m5U341) in tmRNA (transfer-mRNA). This is tRNA/tmRNA (uracil-C(5))-methyltransferase from Shewanella woodyi (strain ATCC 51908 / MS32).